A 128-amino-acid chain; its full sequence is 3-aminoacrylate deaminase RutC (128 aa).

The protein belongs to the RutC family.

It carries out the reaction (Z)-3-aminoacrylate + H2O + H(+) = 3-oxopropanoate + NH4(+). Functionally, involved in pyrimidine catabolism. Catalyzes the deamination of 3-aminoacrylate to malonic semialdehyde, a reaction that can also occur spontaneously. RutC may facilitate the reaction and modulate the metabolic fitness, rather than catalyzing essential functions. The polypeptide is 3-aminoacrylate deaminase RutC (Azorhizobium caulinodans (strain ATCC 43989 / DSM 5975 / JCM 20966 / LMG 6465 / NBRC 14845 / NCIMB 13405 / ORS 571)).